The chain runs to 810 residues: MKMMMIMKTTLLLISVLLTQALQSQGRPAIQDEAPAEPTSYTLDSGEKLELSCKAKEDTQKVTWTKDLVPLVDGEHTRLRNDQMEIEKVEPTDSGLYACFAQGLNSNHTEYFNISVTDEEDEVDSSSEEAKLSNDQNLPMAPVWAQPDKMEKKLHAVPASKTVKFRCQANGNPTPTLKWLKNGKEFKRDQRIGGFKVREHMWTIIMESVVPSDRGNYTCLVENRHGSINHTYQLDVVERSPHRPILQAGLPANRTAVVGSDVEFECKVFSDPQPHIQWLKHIEVNGSRYGPDGLPYVRALKTAGVNTTDKEMEVLQIRNVSLEDAGEYTCLAGNSIGHSHHSAWLTVYKAVPPTQLPNQTYLEVLIYCVGFFLICVMVGTAVLAKMHSSAKKSDFNSQLAVHKLAKSIPLRRQVTVSVDSSSSMHSGGMLVRPSRLSSSGSPMLSGVSEYELPQDPRWEVQRDRLVLGKPLGEGCFGQVMMAEAMGMDKEKPNRITKVAVKMLKSDATEKDLSDLISEMEMMKIIGKHKNIINLLGACTQDGPLYVIVEFAAKGNLREYLRVRRPPGMEYCYNPDQVPVENMSIKDLVSCAYQVARGMEYLASKKCIHRDLAARNVLVTEDNVMKIADFGLARDIHHIDYYKKTTNGRLPVKWMAPEALFDRIYTHQSDVWSFGVLLWEIFTLGGSPYPGVPVEELFKLLKEGHRMDRPSTCTHELYMMMRDCWHAVPSQRPTFKQLVEDLDRTLSMTSNQEYLDLSVSLDQFSPNFPDTRSSTCSSGEDSVFSHDAGADEPCLPKFPPHPNRGVAFKKR.

An N-terminal signal peptide occupies residues methionine 1–glycine 26. Residues arginine 27–glutamate 363 lie on the Extracellular side of the membrane. 3 consecutive Ig-like C2-type domains span residues proline 28–serine 115, proline 147–aspartate 235, and proline 244–threonine 346. Cysteine 53 and cysteine 99 are disulfide-bonded. N-linked (GlcNAc...) asparagine glycosylation is found at asparagine 107, asparagine 113, asparagine 216, asparagine 229, asparagine 253, asparagine 285, asparagine 306, asparagine 319, and asparagine 358. Cysteine 167 and cysteine 219 are oxidised to a cystine. A disulfide bond links cysteine 266 and cysteine 330. Residues valine 364–alanine 384 form a helical membrane-spanning segment. Over lysine 385–arginine 810 the chain is Cytoplasmic. The residue at position 450 (tyrosine 450) is a Phosphotyrosine; by autocatalysis. The 290-residue stretch at leucine 465–leucine 754 folds into the Protein kinase domain. ATP is bound by residues leucine 471–glycine 477, lysine 501, glutamate 549–alanine 551, and asparagine 555. Phosphotyrosine; by autocatalysis occurs at positions 570 and 572. Residue aspartate 610 is the Proton acceptor of the active site. Residues arginine 614 and aspartate 628 each contribute to the ATP site. 4 positions are modified to phosphotyrosine; by autocatalysis: tyrosine 640, tyrosine 641, tyrosine 717, and tyrosine 753. The interval alanine 787–arginine 810 is disordered.

Belongs to the protein kinase superfamily. Tyr protein kinase family. Fibroblast growth factor receptor subfamily. In terms of assembly, monomer. Homodimer after ligand binding. Interacts with cnpy1. Autophosphorylated. Binding of FGF family members together with heparan sulfate proteoglycan or heparin promotes receptor dimerization and autophosphorylation on tyrosine residues. Autophosphorylation occurs in trans between the two FGFR molecules present in the dimer and proceeds in a highly ordered manner. Phosphotyrosine residues provide docking sites for interacting proteins and so are crucial for FGFR1 function and its regulation. In terms of processing, ubiquitinated. FGFR1 is rapidly ubiquitinated after autophosphorylation, leading to internalization and degradation. Post-translationally, N-glycosylated in the endoplasmic reticulum. The N-glycan chains undergo further maturation to an Endo H-resistant form in the Golgi apparatus. As to expression, initially expressed in adaxial mesoderm with transcripts distinctly localized to the anterior portion of each half-somite. Hereupon, also strongly expressed in the otic vesicles, branchial arches and the brain, especially at the midbrain-hindbrain boundary (MHB).

The protein localises to the cell membrane. The protein resides in the nucleus. Its subcellular location is the cytoplasm. It is found in the cytosol. It localises to the cytoplasmic vesicle. The catalysed reaction is L-tyrosyl-[protein] + ATP = O-phospho-L-tyrosyl-[protein] + ADP + H(+). Present in an inactive conformation in the absence of bound ligand. Ligand binding leads to dimerization and activation by sequential autophosphorylation on tyrosine residues. In terms of biological role, tyrosine-protein kinase that acts as a cell-surface receptor for fibroblast growth factors and plays an essential role in the regulation of embryonic development, cell proliferation, differentiation and migration. Required for normal mesoderm patterning and normal skeletogenesis. Phosphorylates PLCG1, FRS2, GAB1 and SHB. Ligand binding leads to the activation of several signaling cascades. Activation of PLCG1 leads to the production of the cellular signaling molecules diacylglycerol and inositol-1,4,5-trisphosphate. Phosphorylation of FRS2 triggers recruitment of GRB2, GAB1, PIK3R1 and SOS1, and mediates activation of RAS, MAPK1/ERK2, MAPK3/ERK1 and the MAP kinase signaling pathway, as well as of the AKT1 signaling pathway. Promotes phosphorylation of SHC1, STAT1 and PTPN11/SHP2. In the nucleus, enhances RPS6KA1 and CREB1 activity and contributes to the regulation of transcription. FGFR1 signaling is down-regulated by ubiquitination, internalization and degradation. The protein is Fibroblast growth factor receptor 1-A (fgfr1a) of Danio rerio (Zebrafish).